We begin with the raw amino-acid sequence, 334 residues long: Glycerol-3-phosphate dehydrogenase [NAD(P)+] 2 (334 aa).

NADPH is bound by residues tryptophan 16, arginine 36, arginine 37, and lysine 110. The sn-glycerol 3-phosphate site is built by lysine 110 and glycine 140. Alanine 144 lines the NADPH pocket. Residues lysine 195, aspartate 248, serine 258, arginine 259, and asparagine 260 each coordinate sn-glycerol 3-phosphate. The Proton acceptor role is filled by lysine 195. Position 259 (arginine 259) interacts with NADPH. The NADPH site is built by valine 282 and glutamate 284.

This sequence belongs to the NAD-dependent glycerol-3-phosphate dehydrogenase family.

It is found in the cytoplasm. It carries out the reaction sn-glycerol 3-phosphate + NAD(+) = dihydroxyacetone phosphate + NADH + H(+). The catalysed reaction is sn-glycerol 3-phosphate + NADP(+) = dihydroxyacetone phosphate + NADPH + H(+). It functions in the pathway membrane lipid metabolism; glycerophospholipid metabolism. Functionally, catalyzes the reduction of the glycolytic intermediate dihydroxyacetone phosphate (DHAP) to sn-glycerol 3-phosphate (G3P), the key precursor for phospholipid synthesis. The protein is Glycerol-3-phosphate dehydrogenase [NAD(P)+] 2 of Mycobacterium bovis (strain ATCC BAA-935 / AF2122/97).